The primary structure comprises 172 residues: Auxin-responsive protein IAA30 (172 aa).

The span at 1 to 18 (MGRGRSSSSSSIESSCKS) shows a compositional bias: low complexity. The interval 1 to 28 (MGRGRSSSSSSIESSCKSNPFGVSSSNT) is disordered. Residues 35-39 (LRLGL) carry the EAR-like (transcriptional repression) motif. The PB1 domain occupies 82–171 (SFYVKVNMEG…RRLKISRAYH (90 aa)).

The protein belongs to the Aux/IAA family. As to quaternary structure, homodimers and heterodimers.

It localises to the nucleus. Functionally, aux/IAA proteins are short-lived transcriptional factors that function as repressors of early auxin response genes at low auxin concentrations. Repression is thought to result from the interaction with auxin response factors (ARFs), proteins that bind to the auxin-responsive promoter element (AuxRE). Formation of heterodimers with ARF proteins may alter their ability to modulate early auxin response genes expression. The chain is Auxin-responsive protein IAA30 (IAA30) from Arabidopsis thaliana (Mouse-ear cress).